The chain runs to 272 residues: Probable feruloyl esterase C (272 aa).

A signal peptide spans 1–22; that stretch reads MLPTILYSAILALSALTPSALA.

It belongs to the faeC family.

The protein localises to the secreted. It carries out the reaction feruloyl-polysaccharide + H2O = ferulate + polysaccharide.. Involved in degradation of plant cell walls. Hydrolyzes the feruloyl-arabinose ester bond in arabinoxylans, and the feruloyl-galactose ester bond in pectin. Active against paranitrophenyl-acetate, methyl ferulate and wheat arabinoxylan. This Aspergillus clavatus (strain ATCC 1007 / CBS 513.65 / DSM 816 / NCTC 3887 / NRRL 1 / QM 1276 / 107) protein is Probable feruloyl esterase C (faeC-1).